The following is a 378-amino-acid chain: Alcohol dehydrogenase 1 (378 aa).

Cysteine 48 is a Zn(2+) binding site. 49–53 (HTDVL) contacts NAD(+). Histidine 69, cysteine 99, cysteine 102, cysteine 105, cysteine 113, and cysteine 177 together coordinate Zn(2+). Residues 202–207 (GIGTVG), aspartate 226, lysine 231, 274–276 (TGV), 297–299 (IGA), and 321–323 (TAF) contribute to the NAD(+) site.

This sequence belongs to the zinc-containing alcohol dehydrogenase family. Class-IV subfamily. Homodimer. Zn(2+) is required as a cofactor. As to expression, present in non-glandular trichome cells.

Its subcellular location is the nucleus. The protein localises to the cytoplasm. The protein resides in the cytosol. It catalyses the reaction (+)-artemisinic alcohol + NAD(+) = (+)-artemisinic aldehyde + NADH + H(+). It participates in sesquiterpene biosynthesis. Its function is as follows. Involved in the biosynthesis of the antimalarial endoperoxide artemisinin. Catalyzes the conversion of artemisinic alcohol into artemisinic aldehyde. The sequence is that of Alcohol dehydrogenase 1 from Artemisia annua (Sweet wormwood).